The primary structure comprises 339 residues: Glycerol-3-phosphate dehydrogenase [NAD(P)+] (339 aa).

S15, Y16, H36, and K110 together coordinate NADPH. Sn-glycerol 3-phosphate is bound by residues K110, G139, and T141. A143 provides a ligand contact to NADPH. Sn-glycerol 3-phosphate-binding residues include K195, D248, S258, R259, and N260. Catalysis depends on K195, which acts as the Proton acceptor. R259 serves as a coordination point for NADPH. Residues V283 and E285 each contribute to the NADPH site.

The protein belongs to the NAD-dependent glycerol-3-phosphate dehydrogenase family.

Its subcellular location is the cytoplasm. It carries out the reaction sn-glycerol 3-phosphate + NAD(+) = dihydroxyacetone phosphate + NADH + H(+). It catalyses the reaction sn-glycerol 3-phosphate + NADP(+) = dihydroxyacetone phosphate + NADPH + H(+). Its pathway is membrane lipid metabolism; glycerophospholipid metabolism. Its function is as follows. Catalyzes the reduction of the glycolytic intermediate dihydroxyacetone phosphate (DHAP) to sn-glycerol 3-phosphate (G3P), the key precursor for phospholipid synthesis. The sequence is that of Glycerol-3-phosphate dehydrogenase [NAD(P)+] from Erwinia tasmaniensis (strain DSM 17950 / CFBP 7177 / CIP 109463 / NCPPB 4357 / Et1/99).